The following is a 201-amino-acid chain: ATP-dependent Clp protease proteolytic subunit (201 aa).

The active-site Nucleophile is Ser-101. Residue His-126 is part of the active site.

The protein belongs to the peptidase S14 family. Fourteen ClpP subunits assemble into 2 heptameric rings which stack back to back to give a disk-like structure with a central cavity, resembling the structure of eukaryotic proteasomes.

It localises to the cytoplasm. It carries out the reaction Hydrolysis of proteins to small peptides in the presence of ATP and magnesium. alpha-casein is the usual test substrate. In the absence of ATP, only oligopeptides shorter than five residues are hydrolyzed (such as succinyl-Leu-Tyr-|-NHMec, and Leu-Tyr-Leu-|-Tyr-Trp, in which cleavage of the -Tyr-|-Leu- and -Tyr-|-Trp bonds also occurs).. Cleaves peptides in various proteins in a process that requires ATP hydrolysis. Has a chymotrypsin-like activity. Plays a major role in the degradation of misfolded proteins. The polypeptide is ATP-dependent Clp protease proteolytic subunit (Francisella tularensis subsp. tularensis (strain FSC 198)).